The primary structure comprises 230 residues: MIQLSNVRKSYQIGKETFDVLHSIDLDIHQGEYVSIMGPSGSGKSTIMNIIGCLDRPTSGTYQLDGEDISSYKDKELAAVRNRSIGFVFQQFQLLPRLNAKKNVELPMIYSGIGKKERQERAERALEKVGLADRMLHMPNELSGGQKQRVAIARAIVNEPKLILADEPTGALDTKTSEAIMDQFTALNAEGTTIVLVTHEPEVADCTNRIVMVRDGNIVPASSGQRSVGE.

Positions 2-230 constitute an ABC transporter domain; it reads IQLSNVRKSY…ASSGQRSVGE (229 aa). An ATP-binding site is contributed by 38-45; it reads GPSGSGKS.

Belongs to the ABC transporter superfamily. As to quaternary structure, part of a complex composed of YknX, YknY and YknZ. The complex interacts with YknW.

The protein resides in the cell membrane. In terms of biological role, part of an unusual four-component transporter, which is required for protection against the killing factor SdpC (sporulation-delaying protein). This is an uncharacterized protein from Bacillus subtilis (strain 168).